The primary structure comprises 562 residues: Apyrase (562 aa).

The N-terminal stretch at 1 to 24 is a signal peptide; it reads MAGRPGYSEVIFLYVVSVAVIARA. 3 residues coordinate a divalent metal cation: aspartate 47, histidine 49, and aspartate 98. N-linked (GlcNAc...) asparagine glycosylation occurs at asparagine 112. Asparagine 130, histidine 233, and histidine 257 together coordinate a divalent metal cation. Arginine 370 provides a ligand contact to AMP. The N-linked (GlcNAc...) asparagine glycan is linked to asparagine 390. The AMP site is built by arginine 405, phenylalanine 424, and aspartate 514.

This sequence belongs to the 5'-nucleotidase family. (Microbial infection) Interacts with Zika virus envelope protein E and Zika virus-like particles; the interaction does not affect Zika virus replication in human endothelial cells and keratinocytes. A divalent metal cation is required as a cofactor. Post-translationally, the N-terminus is blocked. In terms of tissue distribution, female saliva (at protein level). Female salivary gland (at protein level). Not detected or low-level expression in female carcasses without salivary glands. Not detected in male tissues.

It is found in the secreted. The catalysed reaction is a ribonucleoside 5'-triphosphate + 2 H2O = a ribonucleoside 5'-phosphate + 2 phosphate + 2 H(+). In terms of biological role, facilitates hematophagy by preventing ADP-, collagen- and thrombin-dependent platelet aggregation in the host. Cleaves adenosine triphosphate (ATP) and adenosine diphosphate (ADP) to adenosine monophosphate (AMP) and inorganic phosphate. May reduce probing time by facilitating the speed of locating blood. Its function is as follows. (Microbial infection) Does not affect Zika virus replication in human endothelial cells and keratinocytes. In Aedes aegypti (Yellowfever mosquito), this protein is Apyrase.